We begin with the raw amino-acid sequence, 86 residues long: Small ribosomal subunit protein bS16 (86 aa).

Belongs to the bacterial ribosomal protein bS16 family.

The sequence is that of Small ribosomal subunit protein bS16 from Hamiltonella defensa subsp. Acyrthosiphon pisum (strain 5AT).